The chain runs to 389 residues: Chitin-binding protein CbpD (389 aa).

The first 25 residues, 1 to 25 (MKHYSATLALLPLTLALFLPQAAHA), serve as a signal peptide directing secretion. The region spanning 26–208 (HGSMETPPSR…EAFYACIDVS (183 aa)) is the Chitin-binding type-4 domain.

In terms of processing, can be detected in the extracellular supernatant as a 43 kDa protein and a 23 kDa protein, both proteins have the same N-terminus. Only the larger protein binds chitin, which may protect it from further processing and/or degradation by elastase (lasB). It is not clear whether the short form is functional or a degradation product.

The protein localises to the secreted. Its function is as follows. Binds chitin but does not hydrolyze it, has no detectable protease or staphylolytic activity. In Pseudomonas aeruginosa (strain ATCC 15692 / DSM 22644 / CIP 104116 / JCM 14847 / LMG 12228 / 1C / PRS 101 / PAO1), this protein is Chitin-binding protein CbpD.